The chain runs to 421 residues: Lipid II:glycine glycyltransferase (421 aa).

It belongs to the FemABX family. Monomer.

Its subcellular location is the cytoplasm. The enzyme catalyses beta-D-GlcNAc-(1-&gt;4)-Mur2Ac(oyl-L-Ala-D-isoglutaminyl-L-Lys-D-Ala-D-Ala)-di-trans,octa-cis-undecaprenyl diphosphate + glycyl-tRNA(Gly) = beta-D-GlcNAc-(1-&gt;4)-Mur2Ac(oyl-L-Ala-D-isoglutaminyl-L-Lys-(N(6)-Gly)-D-Ala-D-Ala)-di-trans,octa-cis-undecaprenyl diphosphate + tRNA(Gly) + H(+). Catalyzes the incorporation of the first glycine of the pentaglycine interpeptide bridge, which is characteristic of the S.aureus peptidoglycan. This glycine is added to the epsilon-amino group of the L-lysine of the membrane-bound lipid II intermediate (GlcNAc-(beta-1,4)-N-acetylmuramic acid(-L-Ala-D-iGln-L-Lys-D-Ala-D-Ala)-pyrophosphoryl-undecaprenol), using glycyl-tRNA(Gly) as donor, in a ribosome-independent mechanism. Involved in methicillin resistance. This Staphylococcus aureus (strain MRSA252) protein is Lipid II:glycine glycyltransferase (femX).